The primary structure comprises 94 residues: Protein translocase subunit SecE (94 aa).

The segment at 1 to 32 is disordered; it reads MTDAVGSIDMPDAQDEAPDSKKSRKGGKRGKK. The span at 22–32 shows a compositional bias: basic residues; that stretch reads KSRKGGKRGKK. The helical transmembrane segment at 65 to 85 threads the bilayer; the sequence is TVVIIFVVIMIGLVTLIDYGF.

It belongs to the SecE/SEC61-gamma family. Component of the Sec protein translocase complex. Heterotrimer consisting of SecY, SecE and SecG subunits. The heterotrimers can form oligomers, although 1 heterotrimer is thought to be able to translocate proteins. Interacts with the ribosome. Interacts with SecDF, and other proteins may be involved. Interacts with SecA.

The protein resides in the cell membrane. Essential subunit of the Sec protein translocation channel SecYEG. Clamps together the 2 halves of SecY. May contact the channel plug during translocation. This Streptomyces lividans protein is Protein translocase subunit SecE.